The primary structure comprises 635 residues: Extracellular metalloproteinase 9 (635 aa).

The N-terminal stretch at 1-19 (MHGLLLAAGLLTLPLRALA) is a signal peptide. The propeptide occupies 20–246 (HPGHQSTSIL…IHGVTDYVAD (227 aa)). The N-linked (GlcNAc...) asparagine glycan is linked to Asn-274. Residues 279–307 (TWHSDGNTRYPTTRGNNGIAQDNPSGGTG) form a disordered region. Asn-413 carries N-linked (GlcNAc...) asparagine glycosylation. Residue His-430 coordinates Zn(2+). Residue Glu-431 is part of the active site. His-434 serves as a coordination point for Zn(2+). N-linked (GlcNAc...) asparagine glycosylation is present at Asn-475.

The protein belongs to the peptidase M36 family. Zn(2+) serves as cofactor.

It localises to the secreted. Functionally, secreted metalloproteinase that allows assimilation of proteinaceous substrates. This Uncinocarpus reesii (strain UAMH 1704) protein is Extracellular metalloproteinase 9 (MEP9).